Consider the following 417-residue polypeptide: Serine hydroxymethyltransferase 2 (417 aa).

Residues leucine 121 and 125-127 each bind (6S)-5,6,7,8-tetrahydrofolate; that span reads GHL. At lysine 230 the chain carries N6-(pyridoxal phosphate)lysine. 355–357 lines the (6S)-5,6,7,8-tetrahydrofolate pocket; the sequence is SPF.

This sequence belongs to the SHMT family. Homodimer. It depends on pyridoxal 5'-phosphate as a cofactor.

Its subcellular location is the cytoplasm. The enzyme catalyses (6R)-5,10-methylene-5,6,7,8-tetrahydrofolate + glycine + H2O = (6S)-5,6,7,8-tetrahydrofolate + L-serine. Its pathway is one-carbon metabolism; tetrahydrofolate interconversion. It functions in the pathway amino-acid biosynthesis; glycine biosynthesis; glycine from L-serine: step 1/1. Catalyzes the reversible interconversion of serine and glycine with tetrahydrofolate (THF) serving as the one-carbon carrier. This reaction serves as the major source of one-carbon groups required for the biosynthesis of purines, thymidylate, methionine, and other important biomolecules. Also exhibits THF-independent aldolase activity toward beta-hydroxyamino acids, producing glycine and aldehydes, via a retro-aldol mechanism. This Pseudomonas savastanoi pv. phaseolicola (strain 1448A / Race 6) (Pseudomonas syringae pv. phaseolicola (strain 1448A / Race 6)) protein is Serine hydroxymethyltransferase 2.